The following is a 558-amino-acid chain: Tyrosine N-monooxygenase (558 aa).

A helical transmembrane segment spans residues 13-33; sequence VLAAPLLSSSAILKLLLFVVT. Residues 48-67 form a disordered region; sequence TTKCSSTTCASPPAGVGNPP. Residues 49 to 65 are compositionally biased toward low complexity; sequence TKCSSTTCASPPAGVGN. Heme b contacts are provided by Arg138, Arg167, His422, Arg491, and Cys493.

This sequence belongs to the cytochrome P450 family. Heme b is required as a cofactor.

The protein resides in the endoplasmic reticulum membrane. The catalysed reaction is L-tyrosine + 2 reduced [NADPH--hemoprotein reductase] + 2 O2 = (E)-4-hydroxyphenylacetaldehyde oxime + 2 oxidized [NADPH--hemoprotein reductase] + CO2 + 3 H2O + 2 H(+). The enzyme catalyses L-tyrosine + reduced [NADPH--hemoprotein reductase] + O2 = N-hydroxy-L-tyrosine + oxidized [NADPH--hemoprotein reductase] + H2O + 2 H(+). It carries out the reaction N-hydroxy-L-tyrosine + reduced [NADPH--hemoprotein reductase] + O2 = N,N-dihydroxy-L-tyrosine + oxidized [NADPH--hemoprotein reductase] + H2O + H(+). It catalyses the reaction N,N-dihydroxy-L-tyrosine + H(+) = (E)-4-hydroxyphenylacetaldehyde oxime + CO2 + H2O. Its pathway is secondary metabolite biosynthesis; dhurrin biosynthesis; dhurrin from L-tyrosine: step 1/3. Cytochrome P450 involved in the biosynthesis of the cyanogenic glucoside dhurrin. Catalyzes the conversion of L-tyrosine to p-hydroxyphenylacetaldehyde oxime, via the N-hydroxy-L-tyrosine and N,N-dihydroxy-L-tyrosine intermediates. Produces the (E) isomer of the final oxime product. This Sorghum bicolor (Sorghum) protein is Tyrosine N-monooxygenase (CYP79A1).